The sequence spans 676 residues: Ion-translocating oxidoreductase complex subunit C (676 aa).

2 4Fe-4S ferredoxin-type domains span residues 369–397 (GEPQ…QQLY) and 407–436 (KATT…VQYF). [4Fe-4S] cluster is bound by residues C377, C380, C383, C387, C416, C419, C422, and C426. The disordered stretch occupies residues 600-652 (ARKLEQQQANAEPEQQVDPRKAAVEAAIARAKARKLEQQQANAEPEEQVDPRK). Positions 605–615 (QQQANAEPEQQ) are enriched in low complexity.

Belongs to the 4Fe4S bacterial-type ferredoxin family. RnfC subfamily. In terms of assembly, the complex is composed of six subunits: RsxA, RsxB, RsxC, RsxD, RsxE and RsxG. Requires [4Fe-4S] cluster as cofactor.

It localises to the cell inner membrane. In terms of biological role, part of a membrane-bound complex that couples electron transfer with translocation of ions across the membrane. Required to maintain the reduced state of SoxR. This chain is Ion-translocating oxidoreductase complex subunit C, found in Escherichia coli (strain SMS-3-5 / SECEC).